A 576-amino-acid polypeptide reads, in one-letter code: MVALTEDTQANANIGRLTVQTVEIADETTAIRCLDWDRERFDIEFGLRNGTTYNSFLIKGEKIALVDTSHRKFEKLYLEIVAGLIDPNTIDYLIVSHTEPDHSGLVKDILQLAPNITIVGAKVAIQFLENMVHQPFKSLQVKSGERLDLGNGHSLEFVSAPNLHWPDTILTYDHKTGILYTCDVFGMHYCDDQTYDENFFAIEEDFKYYYDCLMGPNARSVLAALKRIENLAIKTVATGHGPLLQVHISEWLGRYKNWSLEQAKTETLVALFYAEDYGYSEHLVHILGHGCTKTGVAVELIDLNTAEPQEVRELVTQASGLVIAMPSQYSLTAQAALNTILAAVHHKQAIGLLESGGGEDEPVFPLRNKFQELGLVEAFPPILIKEAPAQTTEQLCEEAGTDIGQWLTRDRTIKQIKSINTDLEKALGRISTGLYIITTKKGEIQGAMFASWVTQASLNPLGVAIAVSKERAIESLMQVGDHFVLNVLEEDNYQGLMKHFLKRFAPGADRFAGIKTYPATDGSPILAESLAYTECEITSRMDCGDHWIIYSTVHVGRVANVHAMTAVHHRKVGNHY.

The tract at residues 48–240 (RNGTTYNSFL…LAIKTVATGH (193 aa)) is zinc metallo-hydrolase. Fe cation contacts are provided by H97, E99, D101, H164, D183, and H240. A Flavodoxin-like domain is found at 269-431 (VALFYAEDYG…DLEKALGRIS (163 aa)). Residues 432 to 576 (TGLYIITTKK…VHHRKVGNHY (145 aa)) form a flavodoxin-reductase-like region.

It in the N-terminal section; belongs to the zinc metallo-hydrolase group 3 family. The protein in the C-terminal section; belongs to the flavodoxin reductase family. It depends on Fe cation as a cofactor.

Mediates electron transfer from NADH to oxygen, reducing it to water. This modular protein has 3 redox cofactors, in other organisms the same activity requires 2 or 3 proteins. This chain is Putative diflavin flavoprotein A 1 (dfa1), found in Nostoc sp. (strain PCC 7120 / SAG 25.82 / UTEX 2576).